We begin with the raw amino-acid sequence, 74 residues long: Putative defensin-like protein 186 (74 aa).

A signal peptide spans 1 to 22; sequence MKNSSIILVLVFFFFISSSGEA. Cystine bridges form between cysteine 25–cysteine 74, cysteine 31–cysteine 51, cysteine 37–cysteine 68, and cysteine 41–cysteine 70.

This sequence belongs to the DEFL family.

The protein resides in the secreted. This chain is Putative defensin-like protein 186 (LCR40), found in Arabidopsis thaliana (Mouse-ear cress).